The primary structure comprises 339 residues: Lipoate--protein ligase (339 aa).

Residues 31–221 enclose the BPL/LPL catalytic domain; sequence FLDDDILFPY…QLLQIETISQ (191 aa). Residues R73, 78 to 81, K135, and A139 each bind ATP; that span reads GAVY. Residue K135 coordinates (R)-lipoate.

It belongs to the LplA family.

The catalysed reaction is L-lysyl-[lipoyl-carrier protein] + (R)-lipoate + ATP = N(6)-[(R)-lipoyl]-L-lysyl-[lipoyl-carrier protein] + AMP + diphosphate + H(+). Its pathway is protein modification; protein lipoylation via exogenous pathway; protein N(6)-(lipoyl)lysine from lipoate: step 1/2. It participates in protein modification; protein lipoylation via exogenous pathway; protein N(6)-(lipoyl)lysine from lipoate: step 2/2. Catalyzes specifically the lipoylation of GcvH-L (SpyM50867), likely via the ATP-dependent activation of lipoate to lipoyl-AMP and the transfer of the activated lipoyl onto the lipoyl domain of the target protein. The polypeptide is Lipoate--protein ligase (Streptococcus pyogenes serotype M5 (strain Manfredo)).